The primary structure comprises 610 residues: Probable galacturonosyltransferase 5 (610 aa).

At 1–6 (MNQVRR) the chain is on the cytoplasmic side. A helical; Signal-anchor for type II membrane protein transmembrane segment spans residues 7–27 (WQRILILSLLLLSVLAPIVFV). At 28–610 (SNRLKSITSV…PHLQRCNIHD (583 aa)) the chain is on the lumenal side. The span at 86 to 101 (LSNSSDKSNDTVQSNE) shows a compositional bias: polar residues. The tract at residues 86–170 (LSNSSDKSND…KNTRVQLERA (85 aa)) is disordered. Asparagine 88 and asparagine 94 each carry an N-linked (GlcNAc...) asparagine glycan. Residues 110–123 (EVDKGNNHKPKEEQ) show a composition bias toward basic and acidic residues. The span at 124–135 (AVSQKTTVSSNA) shows a compositional bias: polar residues. Residues 139-170 (ISARDIQLNHKTEFRPPSSKSEKNTRVQLERA) are compositionally biased toward basic and acidic residues. 4 N-linked (GlcNAc...) asparagine glycosylation sites follow: asparagine 196, asparagine 338, asparagine 401, and asparagine 475.

It belongs to the glycosyltransferase 8 family. Expressed in roots, inflorescences, siliques, leaves and stems.

The protein resides in the golgi apparatus membrane. It participates in glycan metabolism; pectin biosynthesis. May be involved in pectin and/or xylans biosynthesis in cell walls. The chain is Probable galacturonosyltransferase 5 (GAUT5) from Arabidopsis thaliana (Mouse-ear cress).